The sequence spans 373 residues: Transcription factor SPATULA (373 aa).

Basic and acidic residues predominate over residues 1-21 (MISQREEREEKKQRVMGDKKL). 2 disordered regions span residues 1-46 (MISQ…PSSS) and 141-210 (VQGN…KRRR). A compositionally biased stretch (low complexity) spans 141–160 (VQGNSSGTRVSSSSVGASGN). Residues 161–177 (ETDEYDCESEEGGEAVV) are compositionally biased toward acidic residues. Residues 182-191 (SSKSGPSSRS) are compositionally biased toward low complexity. The segment covering 197–210 (RAAEVHNLSEKRRR) has biased composition (basic and acidic residues). Positions 197-246 (RAAEVHNLSEKRRRSRINEKMKALQSLIPNSNKTDKASMLDEAIEYLKQL) constitute a bHLH domain.

In terms of assembly, homodimer. Interacts with HEC1, HEC2 and HEC3. Binds to RGL2 and RGA. In terms of tissue distribution, expressed in lateral root caps, young leaves, stipules, maturing pith cells of the stem, differentiating vascular cells, shoot apical meristems and flowers.

Its subcellular location is the nucleus. In terms of biological role, transcription factor that plays a role in floral organogenesis. Promotes the growth of carpel margins and of pollen tract tissues derived from them. This chain is Transcription factor SPATULA (SPT), found in Arabidopsis thaliana (Mouse-ear cress).